Here is an 84-residue protein sequence, read N- to C-terminus: Small ribosomal subunit protein bS20 (84 aa).

Positions 1-25 (MPVIKSAMKRVRTSEKAAARNRSQM) are disordered.

Belongs to the bacterial ribosomal protein bS20 family.

Its function is as follows. Binds directly to 16S ribosomal RNA. This is Small ribosomal subunit protein bS20 from Pediococcus pentosaceus (strain ATCC 25745 / CCUG 21536 / LMG 10740 / 183-1w).